The sequence spans 1399 residues: DNA-directed RNA polymerase subunit beta' (1399 aa).

Cysteine 70, cysteine 72, cysteine 85, and cysteine 88 together coordinate Zn(2+). Positions 460, 462, and 464 each coordinate Mg(2+). Zn(2+) is bound by residues cysteine 814, cysteine 888, cysteine 895, and cysteine 898.

This sequence belongs to the RNA polymerase beta' chain family. As to quaternary structure, the RNAP catalytic core consists of 2 alpha, 1 beta, 1 beta' and 1 omega subunit. When a sigma factor is associated with the core the holoenzyme is formed, which can initiate transcription. The cofactor is Mg(2+). It depends on Zn(2+) as a cofactor.

It catalyses the reaction RNA(n) + a ribonucleoside 5'-triphosphate = RNA(n+1) + diphosphate. In terms of biological role, DNA-dependent RNA polymerase catalyzes the transcription of DNA into RNA using the four ribonucleoside triphosphates as substrates. The polypeptide is DNA-directed RNA polymerase subunit beta' (Pseudomonas savastanoi pv. phaseolicola (strain 1448A / Race 6) (Pseudomonas syringae pv. phaseolicola (strain 1448A / Race 6))).